A 486-amino-acid polypeptide reads, in one-letter code: uncharacterized protein (486 aa).

2 consecutive ABC transporter domains span residues 2-241 (VEFK…KVFV) and 249-486 (FEKD…LLFL). ATP is bound at residue 36 to 43 (GKNGEGKS).

Belongs to the ABC transporter superfamily.

This is an uncharacterized protein from Borreliella burgdorferi (strain ATCC 35210 / DSM 4680 / CIP 102532 / B31) (Borrelia burgdorferi).